The chain runs to 401 residues: 4-hydroxy-3-methylbut-2-en-1-yl diphosphate synthase (ferredoxin) (401 aa).

Positions 306, 309, 340, and 347 each coordinate [4Fe-4S] cluster.

This sequence belongs to the IspG family. [4Fe-4S] cluster serves as cofactor.

The catalysed reaction is (2E)-4-hydroxy-3-methylbut-2-enyl diphosphate + 2 oxidized [2Fe-2S]-[ferredoxin] + H2O = 2-C-methyl-D-erythritol 2,4-cyclic diphosphate + 2 reduced [2Fe-2S]-[ferredoxin] + H(+). The protein operates within isoprenoid biosynthesis; isopentenyl diphosphate biosynthesis via DXP pathway; isopentenyl diphosphate from 1-deoxy-D-xylulose 5-phosphate: step 5/6. Converts 2C-methyl-D-erythritol 2,4-cyclodiphosphate (ME-2,4cPP) into 1-hydroxy-2-methyl-2-(E)-butenyl 4-diphosphate. The sequence is that of 4-hydroxy-3-methylbut-2-en-1-yl diphosphate synthase (ferredoxin) from Synechococcus sp. (strain CC9902).